Consider the following 220-residue polypeptide: ATP synthase subunit beta, chloroplastic (220 aa).

This sequence belongs to the ATPase alpha/beta chains family. In terms of assembly, F-type ATPases have 2 components, CF(1) - the catalytic core - and CF(0) - the membrane proton channel. CF(1) has five subunits: alpha(3), beta(3), gamma(1), delta(1), epsilon(1). CF(0) has four main subunits: a(1), b(1), b'(1) and c(9-12).

It is found in the plastid. It localises to the chloroplast thylakoid membrane. It carries out the reaction ATP + H2O + 4 H(+)(in) = ADP + phosphate + 5 H(+)(out). Produces ATP from ADP in the presence of a proton gradient across the membrane. The catalytic sites are hosted primarily by the beta subunits. The protein is ATP synthase subunit beta, chloroplastic (atpB) of Osmundastrum cinnamomeum (Cinnamon fern).